Reading from the N-terminus, the 110-residue chain is METSVVLRSVRLSAQKGRLVVNQIRGLQVDQAIKLLTFSPKKGAVIILKLLESAVANAEHNEGADIDELKVARVFIGQGSSLKRVSPRAKGRGNRISKPTCNIFLTVCNR.

It belongs to the universal ribosomal protein uL22 family. As to quaternary structure, part of the 50S ribosomal subunit.

This protein binds specifically to 23S rRNA; its binding is stimulated by other ribosomal proteins, e.g. L4, L17, and L20. It is important during the early stages of 50S assembly. It makes multiple contacts with different domains of the 23S rRNA in the assembled 50S subunit and ribosome. In terms of biological role, the globular domain of the protein is located near the polypeptide exit tunnel on the outside of the subunit, while an extended beta-hairpin is found that lines the wall of the exit tunnel in the center of the 70S ribosome. The chain is Large ribosomal subunit protein uL22 from Nitrosomonas eutropha (strain DSM 101675 / C91 / Nm57).